We begin with the raw amino-acid sequence, 369 residues long: 4-hydroxy-3-methylbut-2-en-1-yl diphosphate synthase (flavodoxin) (369 aa).

Positions 270, 273, 305, and 312 each coordinate [4Fe-4S] cluster.

It belongs to the IspG family. Requires [4Fe-4S] cluster as cofactor.

The catalysed reaction is (2E)-4-hydroxy-3-methylbut-2-enyl diphosphate + oxidized [flavodoxin] + H2O + 2 H(+) = 2-C-methyl-D-erythritol 2,4-cyclic diphosphate + reduced [flavodoxin]. The protein operates within isoprenoid biosynthesis; isopentenyl diphosphate biosynthesis via DXP pathway; isopentenyl diphosphate from 1-deoxy-D-xylulose 5-phosphate: step 5/6. Converts 2C-methyl-D-erythritol 2,4-cyclodiphosphate (ME-2,4cPP) into 1-hydroxy-2-methyl-2-(E)-butenyl 4-diphosphate. The polypeptide is 4-hydroxy-3-methylbut-2-en-1-yl diphosphate synthase (flavodoxin) (Pseudomonas putida (strain W619)).